A 197-amino-acid polypeptide reads, in one-letter code: Probable NADPH:quinone oxidoreductase 1 (197 aa).

Belongs to the SsuE family. As to quaternary structure, homotetramer. It depends on FMN as a cofactor.

The enzyme catalyses a quinone + NADH + H(+) = a quinol + NAD(+). The catalysed reaction is a quinone + NADPH + H(+) = a quinol + NADP(+). Its function is as follows. The enzyme apparently serves as a quinone reductase in connection with conjugation reactions of hydroquinones involved in detoxification pathways. The protein is Probable NADPH:quinone oxidoreductase 1 of Oryza sativa subsp. japonica (Rice).